Consider the following 915-residue polypeptide: Mitogen-activated protein kinase kinae kinase MST11 (915 aa).

Disordered regions lie at residues 1-65 (MAML…PKHW), 134-171 (KKRN…NPSV), and 183-249 (GMAY…TRTD). Low complexity predominate over residues 26 to 45 (AQASYPPSRRAPAVPPASQS). The 64-residue stretch at 65–128 (WDEDKVCEYL…FLSIKKLRTK (64 aa)) folds into the SAM domain. Composition is skewed to low complexity over residues 152–163 (SESPSKPFHSSS) and 188–203 (PSRP…PLPS). The region spanning 263 to 353 (NQDVIRVIST…NRLILRRVPA (91 aa)) is the Ras-associating domain. The Protein kinase domain occupies 641–911 (WMKGALIGQG…ADDLMLSPFL (271 aa)). ATP-binding positions include 647-655 (IGQGSFGCV) and K670.

It belongs to the protein kinase superfamily. STE Ser/Thr protein kinase family. MAP kinase kinase kinase subfamily. In terms of assembly, interacts with the adapter protein MST50.

The catalysed reaction is L-seryl-[protein] + ATP = O-phospho-L-seryl-[protein] + ADP + H(+). It carries out the reaction L-threonyl-[protein] + ATP = O-phospho-L-threonyl-[protein] + ADP + H(+). Mitogen-activated protein kinase kinase kinase; part of the MST11-MST7-PMK1 MAP kinase (MAPK) cascade that is essential for appressorium formation, penetration and invasive growth. The MST11-MST7-PMK1 MAP kinase cascade transduces signals from the cell surface sensors MDB2 and SHO1 that recognize various surface signals such as surface hydrophobicity, cutin monomers, and rice leaf waxes. MST11 acts as the upstream MAPKKK that directly phosphorylates MAPKK MST7. MST11 but not MST7 may also be involved in the OSM1 MAPK pathway in response to osmotic stresses. The chain is Mitogen-activated protein kinase kinae kinase MST11 from Pyricularia oryzae (strain 70-15 / ATCC MYA-4617 / FGSC 8958) (Rice blast fungus).